Reading from the N-terminus, the 441-residue chain is GPI mannosyltransferase 2 (441 aa).

The next 10 membrane-spanning stretches (helical) occupy residues 4–24 (MTVLSPSAGSQSACSLGLILV), 35–55 (ILFGLWKALIFLVIVICPGLG), 115–135 (LLALLASVLVLYRLSVNIFGG), 143–163 (LCFLSAALHIISPAGAFLSAP), 165–185 (GEALFSLLNISGLYLYSSSVL), 199–223 (LLAAAVLISAATAVRSNGILGGVLF), 249–269 (VIVLGGCVIALGMAVPQYIAF), 306–326 (YWVVPNIPLFLLAMPILALLL), 361–381 (LAIIQALLAVLAFTSYHVQII), and 418–438 (VAVQAIMIYGLIHAVLFGSFL).

This sequence belongs to the PIGV family.

It is found in the endoplasmic reticulum membrane. It functions in the pathway glycolipid biosynthesis; glycosylphosphatidylinositol-anchor biosynthesis. Its function is as follows. Mannosyltransferase involved in glycosylphosphatidylinositol-anchor biosynthesis. Transfers the second mannose to the glycosylphosphatidylinositol during GPI precursor assembly. This is GPI mannosyltransferase 2 (gpi18) from Aspergillus fumigatus (strain ATCC MYA-4609 / CBS 101355 / FGSC A1100 / Af293) (Neosartorya fumigata).